A 95-amino-acid chain; its full sequence is MDNEEQKITLVDEHGNEELYNVLFTFDSEDYGRSYVLLYPSEAEADEEVDIQAYAFMPDENHDLGEGELIPIESDEEWDMVEEVLNTFLGDQDQD.

It belongs to the UPF0473 family.

The polypeptide is UPF0473 protein PEPE_1260 (Pediococcus pentosaceus (strain ATCC 25745 / CCUG 21536 / LMG 10740 / 183-1w)).